A 112-amino-acid polypeptide reads, in one-letter code: Putative pterin-4-alpha-carbinolamine dehydratase (112 aa).

It belongs to the pterin-4-alpha-carbinolamine dehydratase family.

The catalysed reaction is (4aS,6R)-4a-hydroxy-L-erythro-5,6,7,8-tetrahydrobiopterin = (6R)-L-erythro-6,7-dihydrobiopterin + H2O. The chain is Putative pterin-4-alpha-carbinolamine dehydratase from Shewanella loihica (strain ATCC BAA-1088 / PV-4).